A 139-amino-acid chain; its full sequence is Nucleoside diphosphate kinase (139 aa).

ATP contacts are provided by Lys10, Phe58, Arg86, Thr92, Arg103, and Asn113. The active-site Pros-phosphohistidine intermediate is the His116.

It belongs to the NDK family. Homotetramer. Mg(2+) serves as cofactor.

Its subcellular location is the cytoplasm. It catalyses the reaction a 2'-deoxyribonucleoside 5'-diphosphate + ATP = a 2'-deoxyribonucleoside 5'-triphosphate + ADP. The enzyme catalyses a ribonucleoside 5'-diphosphate + ATP = a ribonucleoside 5'-triphosphate + ADP. Major role in the synthesis of nucleoside triphosphates other than ATP. The ATP gamma phosphate is transferred to the NDP beta phosphate via a ping-pong mechanism, using a phosphorylated active-site intermediate. In Oleidesulfovibrio alaskensis (strain ATCC BAA-1058 / DSM 17464 / G20) (Desulfovibrio alaskensis), this protein is Nucleoside diphosphate kinase.